A 1034-amino-acid polypeptide reads, in one-letter code: Beta-galactosidase (1034 aa).

E481 functions as the Proton donor in the catalytic mechanism. Residue E547 is the Nucleophile of the active site.

The protein belongs to the glycosyl hydrolase 2 family.

The enzyme catalyses Hydrolysis of terminal non-reducing beta-D-galactose residues in beta-D-galactosides.. The sequence is that of Beta-galactosidase (bgaM) from Priestia megaterium (strain DSM 319 / IMG 1521) (Bacillus megaterium).